The chain runs to 144 residues: MKIPNRQKFTKNHKRNLITKETRKTGLVLGNYGIKATETGYLKMKQMERIKGDLVKKLKDNMDIYFNFYPLFGLTNKGTARMGAGKGEVSEWYVLVKKGSIVVEFIKSRMTAGAMQKVIRYSANKWPIKVRMTQIKQGLYEKKI.

Belongs to the universal ribosomal protein uL16 family.

The protein resides in the mitochondrion. The protein is Large ribosomal subunit protein uL16m (mrpl16) of Dictyostelium discoideum (Social amoeba).